The following is a 442-amino-acid chain: Interferon-related developmental regulator 2 (442 aa).

Basic residues predominate over residues 1 to 15; it reads MPRARKGNTLRKGGQ. The segment at 1-71 is disordered; it reads MPRARKGNTL…DVVDEQGQQE (71 aa). Residues 43–56 are compositionally biased toward polar residues; the sequence is TASECPSLLSTTAE.

The protein belongs to the IFRD family. As to quaternary structure, associates with ribosomes; promoting ribosome inactivation. As to expression, expressed in many tissues including heart, brain, placenta, lung, liver, skeletal muscle, kidney and pancreas.

Functionally, ribosome-binding protein that acts as an inhibitor of mRNA translation by promoting ribosome inactivation. Associates with the P- and E-sites of the ribosome and inserts a C-terminal helix into the mRNA exit channel to preclude translation. This is Interferon-related developmental regulator 2 from Homo sapiens (Human).